Consider the following 630-residue polypeptide: Mesothelin (630 aa).

A signal peptide spans 1 to 36 (MALPTARPLLGSCGTPALGSLLFLLFSLGWVQPSRT). Asn-57 carries an N-linked (GlcNAc...) asparagine glycan. Position 200 is a phosphoserine; by FAM20C (Ser-200). The required for megakaryocyte-potentiating factor activity stretch occupies residues 262 to 286 (SIPQGIVAAWRQRSSRDPSWRQPER). Cys-302 and Cys-326 are oxidised to a cystine. 3 N-linked (GlcNAc...) asparagine glycosylation sites follow: Asn-388, Asn-496, and Asn-523. Ser-606 is lipidated: GPI-anchor amidated serine. Positions 607-630 (GTPCLLGPGPVLTVLALLLASTLA) are cleaved as a propeptide — removed in mature form.

Belongs to the mesothelin family. As to quaternary structure, interacts with MUC16. In terms of processing, both MPF and the cleaved form of mesothelin are N-glycosylated. Post-translationally, proteolytically cleaved by a furin-like convertase to generate megakaryocyte-potentiating factor (MPF), and the cleaved form of mesothelin. In terms of tissue distribution, expressed in lung. Expressed at low levels in heart, placenta and kidney. Expressed in mesothelial cells. Highly expressed in mesotheliomas, ovarian cancers, and some squamous cell carcinomas (at protein level).

It localises to the cell membrane. The protein resides in the golgi apparatus. The protein localises to the secreted. In terms of biological role, membrane-anchored forms may play a role in cellular adhesion. Functionally, megakaryocyte-potentiating factor (MPF) potentiates megakaryocyte colony formation in vitro. The protein is Mesothelin (MSLN) of Homo sapiens (Human).